A 563-amino-acid chain; its full sequence is Protein NOXP20 (563 aa).

The tract at residues 1–84 is disordered; the sequence is MSDDAGDTLA…ANALEPPLNG (84 aa). Positions 56–68 are enriched in low complexity; sequence AAVQGAGAAAIGP. Serine 120 carries the phosphoserine modification. A disordered region spans residues 165–206; sequence VNSGSSEGAQPNTENGVPEITDAATDQGPAESPPTSPSSASR. Residues 166–179 are compositionally biased toward polar residues; sequence NSGSSEGAQPNTEN. Phosphothreonine occurs at positions 185 and 189. Serine 196 carries the phosphoserine modification. Threonine 199 carries the phosphothreonine modification. Phosphoserine occurs at positions 202 and 261. The stretch at 343–367 forms a coiled coil; the sequence is AAKELENEENQEEQGLEEKGEEFAR. Positions 411 to 436 are disordered; that stretch reads SEEETKKEEKEEKSQDPQEDKKEEKK.

This sequence belongs to the FAM114 family.

Its subcellular location is the cytoplasm. Functionally, may play a role in neuronal cell development. The protein is Protein NOXP20 (FAM114A1) of Homo sapiens (Human).